The chain runs to 274 residues: Type II restriction enzyme HgiBI (274 aa).

This sequence belongs to the TdeIII type II restriction endonuclease family.

It catalyses the reaction Endonucleolytic cleavage of DNA to give specific double-stranded fragments with terminal 5'-phosphates.. Functionally, a P subtype restriction enzyme that recognizes the double-stranded sequence 5'-GGWCC-3' and cleaves after G-1. This system is less active than isoschizomeric RM.HgiEI. The polypeptide is Type II restriction enzyme HgiBI (Herpetosiphon aurantiacus (Herpetosiphon giganteus)).